Reading from the N-terminus, the 223-residue chain is MEVKDILKTVDHTLLATTATWPEIQTILDDAMAYETASACIPASYVKKAAEYVSGKLAICTVIGFPNGYSTTAAKVFECEDAIQNGADEIDMVINLTDVKNGDFDTVEEEIRQIKAKCQDHILKVIVETCQLTKEELIELCGVVTRSGADFIKTSTGFSTAGATFEDVEVMAKYVGEGVKIKAAGGISSLEDAETFIALGASRLGTSRIIKIVKNEAIKTDSY.

The active-site Proton donor/acceptor is the Asp91. Lys153 (schiff-base intermediate with acetaldehyde) is an active-site residue. Catalysis depends on Lys182, which acts as the Proton donor/acceptor.

The protein belongs to the DeoC/FbaB aldolase family. DeoC type 1 subfamily.

The protein resides in the cytoplasm. It catalyses the reaction 2-deoxy-D-ribose 5-phosphate = D-glyceraldehyde 3-phosphate + acetaldehyde. The protein operates within carbohydrate degradation; 2-deoxy-D-ribose 1-phosphate degradation; D-glyceraldehyde 3-phosphate and acetaldehyde from 2-deoxy-alpha-D-ribose 1-phosphate: step 2/2. Functionally, catalyzes a reversible aldol reaction between acetaldehyde and D-glyceraldehyde 3-phosphate to generate 2-deoxy-D-ribose 5-phosphate. This Streptococcus pyogenes serotype M12 (strain MGAS2096) protein is Deoxyribose-phosphate aldolase.